The chain runs to 969 residues: Proprotein convertase subtilisin/kexin type 6 (969 aa).

Residues 1-16 (MPPRAPPAPGPRPPPR) show a composition bias toward pro residues. The segment at 1–39 (MPPRAPPAPGPRPPPRAAAATDTAAGAGGAGGAGGAGGP) is disordered. The signal sequence occupies residues 1–63 (MPPRAPPAPG…LLALPAACSA (63 aa)). Residues 26–39 (GAGGAGGAGGAGGP) show a composition bias toward gly residues. Residues 64 to 149 (PPPRPVYTNH…QQEVKRRVKR (86 aa)) constitute a propeptide that is removed on maturation. The region spanning 168 to 487 (MWYLHCGDKN…FGLVDAEALV (320 aa)) is the Peptidase S8 domain. Active-site charge relay system residues include Asp-205 and His-246. Asn-259 carries N-linked (GlcNAc...) asparagine glycosylation. The Charge relay system role is filled by Ser-420. Residues 495 to 635 (AVPSQHMCVA…SLILYGTAEH (141 aa)) enclose the P/Homo B domain. A Cell attachment site motif is present at residues 553-555 (RGD). The interval 658 to 683 (EPPKAALSPSQVEVPEDEEDYTAQST) is disordered. 5 FU repeats span residues 692–739 (TSVC…GYFG), 743–790 (ARRC…GFYA), 794–838 (QKNC…GTYF), 842–887 (LIRC…GFYP), and 895–943 (HKVC…ETFC). Residues 695-930 (CHPECGDKGC…GFTQLGTSCI (236 aa)) are CRM (Cys-rich motif). Residues Asn-914 and Asn-932 are each glycosylated (N-linked (GlcNAc...) asparagine). One can recognise a PLAC domain in the interval 931 to 969 (TNHTCSNADETFCEMVKSNRLCERKLFIQFCCRTCLLAG).

The protein belongs to the peptidase S8 family. As to quaternary structure, the PACE4A-I precursor protein seems to exist in the reticulum endoplasmic as both a monomer and a dimer-sized complex whereas mature PACE4A-I exists only as a monomer, suggesting that propeptide cleavage affects its tertiary or quaternary structure. Interacts (immature form including the propeptide) with RCN3; probably involved in the maturation and the secretion of PCSK6. Ca(2+) serves as cofactor. Each PACE4 isoform exhibits a unique restricted distribution. Isoform PACE4A-I is expressed in heart, brain, placenta, lung, skeletal muscle, kidney, pancreas, but at comparatively higher levels in the liver. Isoform PACE4A-II is at least expressed in placenta. Isoform PACE4B was only found in the embryonic kidney cell line from which it was isolated. Isoform PACE4C and isoform PACE4D are expressed in placenta. Isoform PACE4E-I is expressed in cerebellum, placenta and pituitary. Isoform PACE4E-II is at least present in cerebellum.

It is found in the secreted. The protein localises to the endoplasmic reticulum. The protein resides in the endomembrane system. Its function is as follows. Serine endoprotease that processes various proproteins by cleavage at paired basic amino acids, recognizing the RXXX[KR]R consensus motif. Likely functions in the constitutive secretory pathway, with unique restricted distribution in both neuroendocrine and non-neuroendocrine tissues. The protein is Proprotein convertase subtilisin/kexin type 6 (PCSK6) of Homo sapiens (Human).